A 149-amino-acid polypeptide reads, in one-letter code: UPF0178 protein Cphy_3042 (149 aa).

Residues 112–128 (QRRHGKQNLHSKNNKKR) show a composition bias toward basic residues. The interval 112-132 (QRRHGKQNLHSKNNKKRTTGD) is disordered.

It belongs to the UPF0178 family.

The chain is UPF0178 protein Cphy_3042 from Lachnoclostridium phytofermentans (strain ATCC 700394 / DSM 18823 / ISDg) (Clostridium phytofermentans).